The sequence spans 67 residues: Archaeal histone HAN1 subunit A (67 aa).

Interaction with DNA stretches follow at residues 20–22 (RVS) and 54–57 (KTVK).

It belongs to the archaeal histone HMF family. As to quaternary structure, heterodimer. Dimers then assemble into higher oligomers, with the DNA wrapped around the protein core.

It is found in the cytoplasm. It localises to the chromosome. Functionally, binds and compact DNA (95 to 150 base pairs) to form nucleosome-like structures that contain positive DNA supercoils. Increases the resistance of DNA to thermal denaturation (in vitro). This Thermococcus zilligii protein is Archaeal histone HAN1 subunit A (han1A).